The sequence spans 296 residues: 110 kDa antigen (296 aa).

Residues 132-143 form a 1; approximate repeat; the sequence is EETQKTVEPEQI. The interval 132–296 is 13.5 X 12 AA approximate tandem repeats of E-E-T-Q-K-T-V-E-P-E-Q-T; that stretch reads EETQKTVEPE…TQETQNTVEP (165 aa). The segment at 133-296 is disordered; the sequence is ETQKTVEPEQ…TQETQNTVEP (164 aa). The stretch at 144 to 155 is one 2; approximate repeat; the sequence is EETQNTVEPEQT. Repeat unit 3 spans residues 156 to 167; it reads EETQKTVEPEQT. The stretch at 168-179 is one 4; approximate repeat; sequence EETQNTVEPEQI. Copy 5 of the repeat occupies 180–191; the sequence is EETQKTVEPEQT. A compositionally biased stretch (basic and acidic residues) spans 181–271; that stretch reads ETQKTVEPEQ…QTEETQKTVE (91 aa). The 6; approximate repeat unit spans residues 192-203; the sequence is EEAQKTVEPEQT. Repeat copies occupy residues 204–215, 216–227, 228–239, 240–251, 252–263, and 264–275. One copy of the 13; approximate repeat lies at 276–287; sequence EETQNTVEPEPT. A compositionally biased stretch (polar residues) spans 277-296; the sequence is ETQNTVEPEPTQETQNTVEP. One copy of the 14; truncated repeat lies at 288–293; the sequence is QETQNT.

The sequence is that of 110 kDa antigen from Plasmodium knowlesi.